Here is a 231-residue protein sequence, read N- to C-terminus: Putative cobalt transport protein CbiM 1 (231 aa).

Helical transmembrane passes span proline 9–phenylalanine 29, valine 41–proline 61, glycine 74–leucine 94, threonine 107–tyrosine 127, valine 135–valine 155, and valine 181–phenylalanine 201.

Belongs to the CbiM family. As to quaternary structure, forms an energy-coupling factor (ECF) transporter complex composed of an ATP-binding protein (A component, CbiO), a transmembrane protein (T component, CbiQ) and 2 possible substrate-capture proteins (S components, CbiM and CbiN) of unknown stoichimetry.

The protein localises to the cell membrane. The protein operates within cofactor biosynthesis; adenosylcobalamin biosynthesis. Part of the energy-coupling factor (ECF) transporter complex CbiMNOQ involved in cobalt import. The polypeptide is Putative cobalt transport protein CbiM 1 (Methanosarcina barkeri (strain Fusaro / DSM 804)).